Consider the following 2006-residue polypeptide: Sodium channel protein type 2 subunit alpha (2006 aa).

A Phosphoserine modification is found at Ser4. The disordered stretch occupies residues 28–61 (RIAEEKAKRPKQERKDEDDENGPKPNSDLEAGKS). Lys38 participates in a covalent cross-link: Glycyl lysine isopeptide (Lys-Gly) (interchain with G-Cter in SUMO1). An I repeat occupies 111-456 (ILTPFNPIRK…QQMLEQLKKQ (346 aa)). The helical transmembrane segment at 130-148 (LFNVLIMCTILTNCVFMTM) threads the bilayer. The helical transmembrane segment at 156–176 (KNVEYTFTGIYTFESLIKILA) threads the bilayer. A helical transmembrane segment spans residues 191-208 (WNWLDFTVITFAYVTEFV). The chain crosses the membrane as a helical span at residues 215–231 (ALRTFRVLRALKTISVI). A helical membrane pass occupies residues 251–270 (VMILTVFCLSVFALIGLQLF). Cysteines 278 and 338 form a disulfide. Asn285, Asn291, Asn297, Asn303, Asn308, and Asn340 each carry an N-linked (GlcNAc...) asparagine glycan. Residues 370-394 (FSWAFLSLFRLMTQDFWENLYQLTL) constitute an intramembrane region (pore-forming). The helical transmembrane segment at 402 to 422 (MIFFVLVIFLGSFYLINLILA) threads the bilayer. A phosphoserine mark is found at Ser468, Ser471, Ser484, Ser526, Ser528, Ser531, Ser553, Ser554, Ser558, Ser573, Ser576, Ser589, Ser610, Ser623, Ser687, Ser688, and Ser722. The segment at 494–529 (SSKSEKELKNRRKKKKQKEQAGEEEKEDAVRKSASE) is disordered. Over residues 511-529 (KEQAGEEEKEDAVRKSASE) the composition is skewed to basic and acidic residues. The disordered stretch occupies residues 589–635 (SENDFADDEHSTFEDNDSRRDSLFVPHRHGERRPSNVSQASRASRGI). Residues 596–610 (DEHSTFEDNDSRRDS) show a composition bias toward basic and acidic residues. The II repeat unit spans residues 742–1014 (CCKPWLKVKH…QIAVGRMQKG (273 aa)). Residues 761–779 (FVDLAITICIVLNTLFMAM) traverse the membrane as a helical segment. A helical membrane pass occupies residues 791-810 (VLSVGNLVFTGIFTAEMFLK). The chain crosses the membrane as a helical span at residues 825–844 (NIFDGFIVSLSLMELGLANV). Residues 847 to 864 (LSVLRSFRLLRVFKLAKS) form a helical membrane-spanning segment. Residues 881 to 899 (ALGNLTLVLAIIVFIFAVV) form a helical membrane-spanning segment. Cys913 and Cys919 are disulfide-bonded. Residues 918–919 (DC) form a binds SCN2B region. Positions 929 to 949 (FFHSFLIVFRVLCGEWIETMW) form an intramembrane region, pore-forming. Cys951 and Cys960 are disulfide-bonded. Residues 963–983 (VFMMVMVIGNLVVLNLFLALL) form a helical membrane-spanning segment. Positions 1121 to 1167 (EEFSSESDMEESKEKLNATSSSEGSTVDIGAPAEGEQPEAEPEESLE) are disordered. A compositionally biased stretch (acidic residues) spans 1156–1167 (EQPEAEPEESLE). The III repeat unit spans residues 1191–1505 (KGKLWWNLRK…KKYYNAMKKL (315 aa)). The chain crosses the membrane as a helical span at residues 1211–1228 (FETFIVFMILLSSGALAF). Residues 1242–1260 (MLEYADKVFTYIFILEMLL) form a helical membrane-spanning segment. A helical transmembrane segment spans residues 1275-1293 (WCWLDFLIVDVSLVSLTAN). Residues 1302 to 1320 (AIKSLRTLRALRPLRALSR) traverse the membrane as a helical segment. Residues 1338 to 1357 (IMNVLLVCLIFWLIFSIMGV) traverse the membrane as a helical segment. Cys1367 and Cys1387 are oxidised to a cystine. The segment at residues 1410 to 1431 (GLGYLSLLQVATFKGWMDIMYA) is an intramembrane region (pore-forming). The chain crosses the membrane as a helical span at residues 1449–1470 (YMYLYFVIFIIFGSFFTLNLFI). A Phosphoserine modification is found at Ser1507. The IV repeat unit spans residues 1514 to 1812 (IPRPANKFQG…WEKFDPDATQ (299 aa)). Residues 1534-1551 (FDISIMILICLNMVTMMV) traverse the membrane as a helical segment. The helical transmembrane segment at 1563-1581 (ILYWINLVFIVLFTGECVL) threads the bilayer. The chain crosses the membrane as a helical span at residues 1594–1611 (GWNIFDFVVVILSIVGMF). A helical transmembrane segment spans residues 1625–1641 (LFRVIRLARIGRILRLI). A helical transmembrane segment spans residues 1661–1678 (LFNIGLLLFLVMFIYAIF). Residues 1701–1723 (FGNSMICLFQITTSAGWDGLLAP) constitute an intramembrane region (pore-forming). Cys1732 and Cys1747 are oxidised to a cystine. The chain crosses the membrane as a helical span at residues 1754–1776 (IFFFVSYIIISFLVVVNMYIAVI). Residues 1906 to 1935 (EEVSAIVIQRAYRRYLLKQKVKKVSSIYKK) form the IQ domain. Ser1931 carries the post-translational modification Phosphoserine. A compositionally biased stretch (basic and acidic residues) spans 1934 to 1965 (KKDKGKEDEGTPIKEDIITDKLNENSTPEKTD). Residues 1934-2006 (KKDKGKEDEG…KGKDIRESKK (73 aa)) are disordered. 3 positions are modified to phosphothreonine: Thr1944, Thr1964, and Thr1967. Position 1972 is a phosphoserine (Ser1972). Residues 1980–2006 (TKPEKEKFEKDKSEKEDKGKDIRESKK) show a composition bias toward basic and acidic residues.

It belongs to the sodium channel (TC 1.A.1.10) family. Nav1.2/SCN2A subfamily. In terms of assembly, heterooligomer of a large alpha subunit and a smaller beta subunit. Heterooligomer with SCN2B or SCN4B; disulfide-linked. Interacts with NEDD4L. Interacts with CALM. Interacts with TMEM233. Post-translationally, sumoylated at Lys-38. Sumoylation is induced by hypoxia, increases voltage-gated sodium current and mediates the early response to acute hypoxia in neurons. Sumoylated SCN2A is located at the cell membrane. Expressed in brain (at protein level). Detected in hippocampus, cortex and brain stem.

The protein resides in the cell membrane. The catalysed reaction is Na(+)(in) = Na(+)(out). Its function is as follows. Mediates the voltage-dependent sodium ion permeability of excitable membranes. Assuming opened or closed conformations in response to the voltage difference across the membrane, the protein forms a sodium-selective channel through which Na(+) ions may pass in accordance with their electrochemical gradient. Implicated in the regulation of hippocampal replay occurring within sharp wave ripples (SPW-R) important for memory. The chain is Sodium channel protein type 2 subunit alpha from Mus musculus (Mouse).